Consider the following 714-residue polypeptide: Polyribonucleotide nucleotidyltransferase (714 aa).

Mg(2+)-binding residues include aspartate 486 and aspartate 492. Residues 553–612 (PRIITMKINPEKIRDVIGKGGAVIRALTEETGTTIDIEEDGTIKIGCTSAEAGEEAKKRI) form the KH domain. The region spanning 622-690 (GQVYDGTVLK…DKGRVRLSAK (69 aa)) is the S1 motif domain.

It belongs to the polyribonucleotide nucleotidyltransferase family. Requires Mg(2+) as cofactor.

The protein resides in the cytoplasm. The enzyme catalyses RNA(n+1) + phosphate = RNA(n) + a ribonucleoside 5'-diphosphate. Functionally, involved in mRNA degradation. Catalyzes the phosphorolysis of single-stranded polyribonucleotides processively in the 3'- to 5'-direction. The protein is Polyribonucleotide nucleotidyltransferase of Methylobacillus flagellatus (strain ATCC 51484 / DSM 6875 / VKM B-1610 / KT).